A 509-amino-acid chain; its full sequence is Cobyric acid synthase (509 aa).

The 198-residue stretch at 262 to 459 (EIKVGIIKLP…IHGIFENDIW (198 aa)) folds into the GATase cobBQ-type domain. The active-site Nucleophile is Cys343. Residue His451 is part of the active site.

It belongs to the CobB/CobQ family. CobQ subfamily.

The protein operates within cofactor biosynthesis; adenosylcobalamin biosynthesis. Its function is as follows. Catalyzes amidations at positions B, D, E, and G on adenosylcobyrinic A,C-diamide. NH(2) groups are provided by glutamine, and one molecule of ATP is hydrogenolyzed for each amidation. In Prochlorococcus marinus (strain MIT 9312), this protein is Cobyric acid synthase.